Here is a 242-residue protein sequence, read N- to C-terminus: tRNA (guanine-N(1)-)-methyltransferase (242 aa).

S-adenosyl-L-methionine-binding positions include Gly-109 and 129 to 134 (LGDFVL).

This sequence belongs to the RNA methyltransferase TrmD family. As to quaternary structure, homodimer.

Its subcellular location is the cytoplasm. It carries out the reaction guanosine(37) in tRNA + S-adenosyl-L-methionine = N(1)-methylguanosine(37) in tRNA + S-adenosyl-L-homocysteine + H(+). Functionally, specifically methylates guanosine-37 in various tRNAs. This chain is tRNA (guanine-N(1)-)-methyltransferase, found in Exiguobacterium sibiricum (strain DSM 17290 / CCUG 55495 / CIP 109462 / JCM 13490 / 255-15).